We begin with the raw amino-acid sequence, 379 residues long: Succinyl-diaminopimelate desuccinylase (379 aa).

Residue His68 participates in Zn(2+) binding. Asp70 is an active-site residue. Asp101 is a Zn(2+) binding site. The active-site Proton acceptor is the Glu135. The Zn(2+) site is built by Glu136, Glu164, and His350.

It belongs to the peptidase M20A family. DapE subfamily. Homodimer. Zn(2+) is required as a cofactor. Co(2+) serves as cofactor.

The catalysed reaction is N-succinyl-(2S,6S)-2,6-diaminopimelate + H2O = (2S,6S)-2,6-diaminopimelate + succinate. Its pathway is amino-acid biosynthesis; L-lysine biosynthesis via DAP pathway; LL-2,6-diaminopimelate from (S)-tetrahydrodipicolinate (succinylase route): step 3/3. Its function is as follows. Catalyzes the hydrolysis of N-succinyl-L,L-diaminopimelic acid (SDAP), forming succinate and LL-2,6-diaminopimelate (DAP), an intermediate involved in the bacterial biosynthesis of lysine and meso-diaminopimelic acid, an essential component of bacterial cell walls. This chain is Succinyl-diaminopimelate desuccinylase, found in Bordetella pertussis (strain Tohama I / ATCC BAA-589 / NCTC 13251).